A 755-amino-acid polypeptide reads, in one-letter code: Kojibiose phosphorylase (755 aa).

333–334 lines the substrate pocket; sequence WD. The active-site Proton donor is Glu473. 573–574 lines the substrate pocket; that stretch reads KQ.

It belongs to the glycosyl hydrolase 65 family.

The enzyme catalyses kojibiose + phosphate = beta-D-glucose 1-phosphate + D-glucose. In vitro catalyzes the phosphorolysis of D-kojibiose into beta-D-glucose 1-phosphate and D-glucose. No other disaccharides tested substitute for D-kojibiose. In the reverse direction disaccharides can be formed from beta-D-glucose 1-phosphate plus D-glucose, L-sorbose, D-sorbitol, L-iditol or 1,5-anhydro-D-glucitol, but with low efficiency. The beta-D-glucose 1-phosphate product is the substrate for YcjU (AC P77366), the next apparent enzyme in the putative biochemical pathway encoded in this locus (yjcM to ycjW). This Escherichia coli (strain K12) protein is Kojibiose phosphorylase (ycjT).